A 141-amino-acid chain; its full sequence is 3-hydroxyacyl-[acyl-carrier-protein] dehydratase FabZ (141 aa).

Residue histidine 48 is part of the active site.

The protein belongs to the thioester dehydratase family. FabZ subfamily.

Its subcellular location is the cytoplasm. The catalysed reaction is a (3R)-hydroxyacyl-[ACP] = a (2E)-enoyl-[ACP] + H2O. Functionally, involved in unsaturated fatty acids biosynthesis. Catalyzes the dehydration of short chain beta-hydroxyacyl-ACPs and long chain saturated and unsaturated beta-hydroxyacyl-ACPs. The sequence is that of 3-hydroxyacyl-[acyl-carrier-protein] dehydratase FabZ from Streptococcus thermophilus (strain CNRZ 1066).